The chain runs to 478 residues: 2-succinylbenzoate--CoA ligase (478 aa).

It belongs to the ATP-dependent AMP-binding enzyme family. MenE subfamily.

It catalyses the reaction 2-succinylbenzoate + ATP + CoA = 2-succinylbenzoyl-CoA + AMP + diphosphate. It participates in quinol/quinone metabolism; 1,4-dihydroxy-2-naphthoate biosynthesis; 1,4-dihydroxy-2-naphthoate from chorismate: step 5/7. It functions in the pathway quinol/quinone metabolism; menaquinone biosynthesis. Its function is as follows. Converts 2-succinylbenzoate (OSB) to 2-succinylbenzoyl-CoA (OSB-CoA). This Bacillus licheniformis (strain ATCC 14580 / DSM 13 / JCM 2505 / CCUG 7422 / NBRC 12200 / NCIMB 9375 / NCTC 10341 / NRRL NRS-1264 / Gibson 46) protein is 2-succinylbenzoate--CoA ligase.